The chain runs to 567 residues: Urease subunit alpha (567 aa).

A Urease domain is found at 129 to 567; it reads GGIDTHIHWI…LPMAQRYFLF (439 aa). Positions 134, 136, and 217 each coordinate Ni(2+). K217 is modified (N6-carboxylysine). H219 is a substrate binding site. Residues H246 and H272 each coordinate Ni(2+). The Proton donor role is filled by H320. D360 is a Ni(2+) binding site.

The protein belongs to the metallo-dependent hydrolases superfamily. Urease alpha subunit family. Heterotrimer of UreA (gamma), UreB (beta) and UreC (alpha) subunits. Three heterotrimers associate to form the active enzyme. Ni cation serves as cofactor. In terms of processing, carboxylation allows a single lysine to coordinate two nickel ions.

Its subcellular location is the cytoplasm. It carries out the reaction urea + 2 H2O + H(+) = hydrogencarbonate + 2 NH4(+). It participates in nitrogen metabolism; urea degradation; CO(2) and NH(3) from urea (urease route): step 1/1. The protein is Urease subunit alpha of Enterobacter sp. (strain 638).